The following is a 185-amino-acid chain: Large ribosomal subunit protein uL5 (185 aa).

Belongs to the universal ribosomal protein uL5 family. Part of the 50S ribosomal subunit; part of the 5S rRNA/L5/L18/L25 subcomplex. Contacts the 5S rRNA and the P site tRNA. Forms a bridge to the 30S subunit in the 70S ribosome.

In terms of biological role, this is one of the proteins that bind and probably mediate the attachment of the 5S RNA into the large ribosomal subunit, where it forms part of the central protuberance. In the 70S ribosome it contacts protein S13 of the 30S subunit (bridge B1b), connecting the 2 subunits; this bridge is implicated in subunit movement. Contacts the P site tRNA; the 5S rRNA and some of its associated proteins might help stabilize positioning of ribosome-bound tRNAs. The polypeptide is Large ribosomal subunit protein uL5 (Rhizobium etli (strain ATCC 51251 / DSM 11541 / JCM 21823 / NBRC 15573 / CFN 42)).